A 107-amino-acid chain; its full sequence is Ig kappa chain V-VI region XRPC 44 (107 aa).

Residues 1 to 23 form a framework-1 region; that stretch reads EIVLTQSPAITAASLGQKVTITC. A disulfide bridge connects residues Cys-23 and Cys-87. A complementarity-determining-1 region spans residues 24–33; that stretch reads SASSSVSYMH. The tract at residues 34–48 is framework-2; it reads WYQQKSGTSPKPWIY. The complementarity-determining-2 stretch occupies residues 49-55; that stretch reads EISKLAS. Residues 56-87 are framework-3; it reads GVPARFSGSGSGTSYSLTISSMEAEDAAIYYC. The interval 88–96 is complementarity-determining-3; sequence QQWNYPLWT. The interval 97-106 is framework-4; it reads FGGGTKLEIK.

The chain is Ig kappa chain V-VI region XRPC 44 from Mus musculus (Mouse).